We begin with the raw amino-acid sequence, 752 residues long: Xanthine dehydrogenase molybdenum-binding subunit (752 aa).

Mo-molybdopterin is bound by residues Q206, F237, R350, and A516.

Belongs to the xanthine dehydrogenase family. In terms of assembly, heterotrimer of XdhA, XdhB and XdhC. It depends on Mo-molybdopterin as a cofactor.

It catalyses the reaction xanthine + NAD(+) + H2O = urate + NADH + H(+). The catalysed reaction is hypoxanthine + NAD(+) + H2O = xanthine + NADH + H(+). It participates in purine metabolism; hypoxanthine degradation; urate from hypoxanthine: step 1/2. It functions in the pathway purine metabolism; hypoxanthine degradation; urate from hypoxanthine: step 2/2. In terms of biological role, presumed to be a dehydrogenase, but possibly an oxidase. Participates in limited purine salvage (requires aspartate) but does not support aerobic growth on purines as the sole carbon source (purine catabolism). The polypeptide is Xanthine dehydrogenase molybdenum-binding subunit (xdhA) (Escherichia coli O157:H7).